A 578-amino-acid polypeptide reads, in one-letter code: Isocitrate dehydrogenase kinase/phosphatase (578 aa).

Residues 315 to 321 and Lys-336 each bind ATP; that span reads APGIRGM. The active site involves Asp-371.

Belongs to the AceK family.

It is found in the cytoplasm. The catalysed reaction is L-seryl-[isocitrate dehydrogenase] + ATP = O-phospho-L-seryl-[isocitrate dehydrogenase] + ADP + H(+). In terms of biological role, bifunctional enzyme which can phosphorylate or dephosphorylate isocitrate dehydrogenase (IDH) on a specific serine residue. This is a regulatory mechanism which enables bacteria to bypass the Krebs cycle via the glyoxylate shunt in response to the source of carbon. When bacteria are grown on glucose, IDH is fully active and unphosphorylated, but when grown on acetate or ethanol, the activity of IDH declines drastically concomitant with its phosphorylation. This is Isocitrate dehydrogenase kinase/phosphatase from Escherichia coli O17:K52:H18 (strain UMN026 / ExPEC).